Consider the following 160-residue polypeptide: Ribosome maturation factor RimP (160 aa).

The protein belongs to the RimP family.

It is found in the cytoplasm. Its function is as follows. Required for maturation of 30S ribosomal subunits. The polypeptide is Ribosome maturation factor RimP (Cronobacter sakazakii (strain ATCC BAA-894) (Enterobacter sakazakii)).